Reading from the N-terminus, the 501-residue chain is Lysine--tRNA ligase (501 aa).

Residues glutamate 412 and glutamate 419 each coordinate Mg(2+).

The protein belongs to the class-II aminoacyl-tRNA synthetase family. In terms of assembly, homodimer. The cofactor is Mg(2+).

It localises to the cytoplasm. The catalysed reaction is tRNA(Lys) + L-lysine + ATP = L-lysyl-tRNA(Lys) + AMP + diphosphate. The polypeptide is Lysine--tRNA ligase (lysS) (Pasteurella multocida (strain Pm70)).